Reading from the N-terminus, the 113-residue chain is Protein FAM27E3 (113 aa).

The interval 1-113 (MGIFQLLRDR…YTHRHTHRVL (113 aa)) is disordered. Residues 77-99 (QTDRERERNTQRLRDRERRENGR) show a composition bias toward basic and acidic residues. The span at 100-113 (HTHTYTHRHTHRVL) shows a compositional bias: basic residues.

The protein belongs to the FAM27 family.

This Homo sapiens (Human) protein is Protein FAM27E3 (FAM27E3).